Consider the following 428-residue polypeptide: tRNA modification GTPase MnmE (428 aa).

(6S)-5-formyl-5,6,7,8-tetrahydrofolate is bound by residues R20, E77, and K117. Residues G213–R351 form the TrmE-type G domain. GTP-binding positions include N223 to T228, S242 to T248, and D267 to G270. Residues S227 and T248 each coordinate Mg(2+). K428 contacts (6S)-5-formyl-5,6,7,8-tetrahydrofolate.

It belongs to the TRAFAC class TrmE-Era-EngA-EngB-Septin-like GTPase superfamily. TrmE GTPase family. Homodimer. Heterotetramer of two MnmE and two MnmG subunits. K(+) serves as cofactor.

The protein resides in the cytoplasm. Exhibits a very high intrinsic GTPase hydrolysis rate. Involved in the addition of a carboxymethylaminomethyl (cmnm) group at the wobble position (U34) of certain tRNAs, forming tRNA-cmnm(5)s(2)U34. This chain is tRNA modification GTPase MnmE, found in Ruegeria sp. (strain TM1040) (Silicibacter sp.).